Consider the following 473-residue polypeptide: Vasculin (473 aa).

3 disordered regions span residues 1-25 (MAQH…SSLN), 46-149 (RHNS…REPN), and 191-342 (VGNL…QERD). The residue at position 49 (serine 49) is a Phosphoserine. Arginine 87 is modified (omega-N-methylarginine). The span at 119-133 (ETGRKEDKRERKQFE) shows a compositional bias: basic and acidic residues. Composition is skewed to polar residues over residues 194–204 (LPSQPVKNGTG) and 251–286 (AFKS…QQPR). A phosphoserine mark is found at serine 274, serine 276, serine 322, and serine 381. The segment covering 293-329 (MRTDKKSEFLKALKRDRVEEEHEDESRAGSEKDDDSF) has biased composition (basic and acidic residues). A disordered region spans residues 444-473 (GPWKNSTFKPTTENDDTETSSSDTSDDDDV). The segment covering 456 to 473 (ENDDTETSSSDTSDDDDV) has biased composition (acidic residues).

It belongs to the vasculin family. In terms of assembly, interacts with GTF2B, GTF2F2, RNA polymerase II and TBP. Widely expressed. Some isoforms may be specifically expressed in veins and arteries (at protein level). Isoform 4 is widely expressed. Isoform 1, isoform 2 and isoform 3 may be specifically expressed in vascular smooth muscle cells.

Its subcellular location is the nucleus. The protein localises to the cytoplasm. In terms of biological role, functions as a GC-rich promoter-specific transactivating transcription factor. The sequence is that of Vasculin (GPBP1) from Homo sapiens (Human).